Reading from the N-terminus, the 634-residue chain is MAKVVGIDLGTTNSCVAVMEGGKPTVIANAEGFRTTPSVVAFAKNQDRLVGQIAKRQAVMNPENTFYSVKRFIGRRPDEVTNELTEVAYKVDTSGNAVKLDSSNAGKQFAPEEISAQVLRKLAEDASKYLGETVTQAVIPVPAYFNDSQRQATKDAGKIAGLEVLRIINEPTAAALAYGLDKKSNERILVFDLGGGTFDVSVLEVGDGVFEVLATSGDTHLGGDDFDKKIVDFLAGEFQKNEGIDLRKDKQALQRLTEAAEKAKIELSSATQTEINLPFITATQDGPKHLDLTLTRAKFEELASDLIDRCRIPVEQAIKDAKLALSEIDEIVLVGGSTRIPAVQAIVKQMTGKEPNQSVNPDEVVAIGAAIQGGVLAGEVKDILLLDVTPLSLGVETLGGVMTKLIPRNTTIPTKKSETFSTAADGQTNVEIHVLQGEREMASDNKSLGTFRLDGIPPAPRGVPQIEVIFVIDANGILNVTAKDKGSGKEQSISITGASTLSDNEVDRMVKDAEANAAADKERRERIDLKNQADTLVYQSEKQLSELGDKISADEKSKVEGFIQELKDALAAEDYDKIRSIIEQLQQALYAAGSSVYQQASAEASANAQAGPSSSSSSSSGDDDVIDAEFSESK.

Thr-197 is modified (phosphothreonine; by autocatalysis). Positions 600–620 are enriched in low complexity; sequence ASAEASANAQAGPSSSSSSSS. Positions 600–634 are disordered; that stretch reads ASAEASANAQAGPSSSSSSSSGDDDVIDAEFSESK. A compositionally biased stretch (acidic residues) spans 621–634; that stretch reads GDDDVIDAEFSESK.

It belongs to the heat shock protein 70 family.

In terms of biological role, acts as a chaperone. This is Chaperone protein DnaK 2 from Synechococcus sp. (strain ATCC 27144 / PCC 6301 / SAUG 1402/1) (Anacystis nidulans).